The following is a 115-amino-acid chain: Large ribosomal subunit protein bL19 (115 aa).

The protein belongs to the bacterial ribosomal protein bL19 family.

This protein is located at the 30S-50S ribosomal subunit interface and may play a role in the structure and function of the aminoacyl-tRNA binding site. This chain is Large ribosomal subunit protein bL19, found in Salmonella choleraesuis (strain SC-B67).